The chain runs to 314 residues: Methylglutaconyl-CoA hydratase, mitochondrial (314 aa).

The transit peptide at 1-42 (MAAAAPGALGALRTGRVRLVAACCARLGPAAWARGTAPRRGY) directs the protein to the mitochondrion. Residue K75 is modified to N6-acetyllysine; alternate. K75 carries the N6-succinyllysine; alternate modification. Residues 80–94 (KNLLKMLSKAVDALK) form an RNA-binding region. K84 carries the post-translational modification N6-succinyllysine. K88 and K119 each carry N6-acetyllysine; alternate. An N6-succinyllysine; alternate mark is found at K88 and K119. Residues K123 and K135 each carry the N6-succinyllysine modification. Residues K179 and K186 each carry the N6-acetyllysine; alternate modification. K179 and K186 each carry N6-succinyllysine; alternate. N6-succinyllysine is present on K304.

The protein belongs to the enoyl-CoA hydratase/isomerase family. In terms of assembly, homohexamer. As to expression, detected in heart, brain, liver, spleen, skeletal muscle and kidney. Expressed in brain, kidney, liver and spleen tissue (at protein level).

Its subcellular location is the mitochondrion. The catalysed reaction is (3S)-3-hydroxy-3-methylglutaryl-CoA = 3-methyl-(2E)-glutaconyl-CoA + H2O. It carries out the reaction (3S)-citramalyl-CoA = itaconyl-CoA + H2O. The enzyme catalyses 3-hydroxyisovaleryl-CoA = 3-methylbut-2-enoyl-CoA + H2O. It catalyses the reaction (S)-3-hydroxyglutaryl-CoA = (2E)-glutaconyl-CoA + H2O. The protein operates within amino-acid degradation; L-leucine degradation; (S)-3-hydroxy-3-methylglutaryl-CoA from 3-isovaleryl-CoA: step 3/3. Its function is as follows. Catalyzes the fifth step in the leucine degradation pathway, the reversible hydration of 3-methylglutaconyl-CoA (3-MG-CoA) to 3-hydroxy-3-methylglutaryl-CoA (HMG-CoA). Can catalyze the reverse reaction but at a much lower rate in vitro. HMG-CoA is then quickly degraded by another enzyme (such as HMG-CoA lyase) to give acetyl-CoA and acetoacetate. Uses other substrates such as (2E)-glutaconyl-CoA efficiently in vitro, and to a lesser extent 3-methylcrotonyl-CoA (3-methyl-(2E)-butenoyl-CoA), crotonyl-CoA ((2E)-butenoyl-CoA) and 3-hydroxybutanoyl-CoA (the missing carboxylate reduces affinity to the active site). Originally it was identified as an RNA-binding protein as it binds to AU-rich elements (AREs) in vitro. AREs direct rapid RNA degradation and mRNA deadenylation. Might have itaconyl-CoA hydratase activity, converting itaconyl-CoA into citramalyl-CoA in the C5-dicarboxylate catabolism pathway. The C5-dicarboxylate catabolism pathway is required to detoxify itaconate, an antimicrobial metabolite and immunomodulator produced by macrophages during certain infections, that can act as a vitamin B12-poisoning metabolite. In Mus musculus (Mouse), this protein is Methylglutaconyl-CoA hydratase, mitochondrial (Auh).